A 1008-amino-acid polypeptide reads, in one-letter code: Envelopment polyprotein (1008 aa).

Residues 1-17 (MVRTYLLLLLLCGPATP) form the signal peptide. At 18 to 394 (FFNHLMDVTR…NWANIHCFSK (377 aa)) the chain is on the lumenal side. N-linked (GlcNAc...) asparagine; by host glycosylation is found at asparagine 34, asparagine 70, and asparagine 108. Disulfide bonds link cysteine 138–cysteine 269, cysteine 156–cysteine 166, cysteine 206–cysteine 247, cysteine 216–cysteine 226, cysteine 233–cysteine 238, cysteine 292–cysteine 295, cysteine 299–cysteine 368, and cysteine 319–cysteine 324. Asparagine 208 is a glycosylation site (N-linked (GlcNAc...) asparagine; by host). A helical transmembrane segment spans residues 395–415 (EQVLILVAVSSLCILLLASVL). At 416–496 (RALKVIATFT…VRQKMFNLTR (81 aa)) the chain is on the cytoplasmic side. A golgi retention signal region spans residues 419–465 (KVIATFTWKIIKPFWWILSLLCRTCSKRLNKRAERLKESIHSLEEGL). Residues 461–465 (LEEGL) form an important for correct targeting of the glycoproteins to the Golgi complex but not for heterodimerization region. An internal signal sequence for glycoprotein C region spans residues 497–513 (LSPVVVGMLCLACPVES). Intrachain disulfides connect cysteine 514/cysteine 555, cysteine 527/cysteine 537, cysteine 580/cysteine 677, cysteine 595/cysteine 789, cysteine 601/cysteine 650, cysteine 607/cysteine 657, cysteine 612/cysteine 639, cysteine 643/cysteine 648, cysteine 728/cysteine 742, cysteine 758/cysteine 771, cysteine 851/cysteine 924, and cysteine 861/cysteine 864. The Lumenal portion of the chain corresponds to 514–977 (CSDSISVTAS…GWFKASWLRA (464 aa)). Residues 601–607 (CHLMGAC) are fusion loop. Residues 644–655 (GGALCQCFNMRP) form a fusion loop region. Residues asparagine 691 and asparagine 696 are each glycosylated (N-linked (GlcNAc...) asparagine; by host). N-linked (GlcNAc...) asparagine; by host glycosylation is found at asparagine 912 and asparagine 949. A helical transmembrane segment spans residues 978–998 (IWAILGGTVSLIIGVVIIYMV). Over 999 to 1008 (FTLCLKVKKS) the chain is Cytoplasmic.

This sequence belongs to the phlebovirus envelope glycoprotein family. As to quaternary structure, homodimer. Heterodimer with glycoprotein C. Homotrimer (postfusion). In terms of assembly, heterodimer with glycoprotein N. Homotrimer (postfusion). Specific enzymatic cleavages in vivo yield mature proteins including glycoprotein C and glycoprotein N. Post-translationally, the cytoplasmic tail is Palmitoylated. In terms of processing, glycosylated. Contains principally poly-N-acetyllactosamine glycans. Glycosylated. Contains principally oligomannose-type glycans that can attach to host CD209/DC-SIGN. Post-translationally, palmitoylated.

It localises to the virion membrane. The protein resides in the host Golgi apparatus membrane. Its subcellular location is the host endoplasmic reticulum membrane. Its function is as follows. Structural component of the virion that interacts with glycoprotein C. It shields the hydrophobic fusion loops of the glycoprotein C, preventing premature fusion. The glycoprotein protrusions are arranged on an icosahedral lattice, with T=12 triangulation. They are able to attach the virion to the host cell receptor CD209/DC-SIGN and to promote fusion of membranes with the late endosome after endocytosis of the virion. Plays a role in the packaging of ribonucleoproteins during virus assembly. In terms of biological role, structural component of the virion that interacts with glycoprotein N. Acts as a class II fusion protein that is activated upon acidification and subsequent repositioning of the glycoprotein N. The glycoprotein protrusions are arranged on an icosahedral lattice, with T=12 triangulation. They are able to attach the virion to the host cell receptor CD209/DC-SIGN and to promote fusion of membranes with the late endosome after endocytosis of the virion. This is Envelopment polyprotein (GP) from Homo sapiens (Human).